The primary structure comprises 85 residues: Cell division topological specificity factor (85 aa).

It belongs to the MinE family.

Functionally, prevents the cell division inhibition by proteins MinC and MinD at internal division sites while permitting inhibition at polar sites. This ensures cell division at the proper site by restricting the formation of a division septum at the midpoint of the long axis of the cell. The protein is Cell division topological specificity factor of Thioalkalivibrio sulfidiphilus (strain HL-EbGR7).